Here is a 237-residue protein sequence, read N- to C-terminus: Lectin alpha chain (237 aa).

2 residues coordinate Mn(2+): Glu8 and Asp10. Positions 10, 12, 14, and 19 each coordinate Ca(2+). Tyr12 lines the a carbohydrate pocket. Mn(2+) is bound by residues Asp19 and His24. 99-100 (LY) is a binding site for a carbohydrate. Asp208 contributes to the Ca(2+) binding site. Arg228 contacts a carbohydrate.

Belongs to the leguminous lectin family. As to quaternary structure, equilibrium between homodimer and homotetramer. Oligomerization is pH-dependent with homotetramers forming at pH 6.5 and above. The beta and gamma chains are produced by partial proteolytic processing of the lectin alpha chain by an asparaginyl endopeptidase. Mixture of 60% alpha lectin and 40% of its beta and gamma proteolytic fragments. In terms of tissue distribution, seed.

It localises to the vacuole. The protein localises to the aleurone grain. D-mannose/D-glucose-binding lectin. Has anti-inflammatory activity in rats. Induces histamine release in mast cells from hamster and rat. Induces lymphocyte proliferation and IFNG production. Shows toxicity against the aquatic snail B.glabrata at concentrations higher than 20 ug/ml. In Dioclea virgata, this protein is Lectin alpha chain.